The chain runs to 154 residues: Ribosomal RNA large subunit methyltransferase H (154 aa).

S-adenosyl-L-methionine contacts are provided by residues glycine 103 and 122–127 (FSKLTF).

It belongs to the RNA methyltransferase RlmH family. In terms of assembly, homodimer.

It localises to the cytoplasm. The enzyme catalyses pseudouridine(1915) in 23S rRNA + S-adenosyl-L-methionine = N(3)-methylpseudouridine(1915) in 23S rRNA + S-adenosyl-L-homocysteine + H(+). Specifically methylates the pseudouridine at position 1915 (m3Psi1915) in 23S rRNA. The sequence is that of Ribosomal RNA large subunit methyltransferase H from Caldicellulosiruptor saccharolyticus (strain ATCC 43494 / DSM 8903 / Tp8T 6331).